Reading from the N-terminus, the 192-residue chain is Large ribosomal subunit protein uL5 (192 aa).

The protein belongs to the universal ribosomal protein uL5 family. As to quaternary structure, part of the 50S ribosomal subunit; part of the 5S rRNA/L5/L18/L25 subcomplex. Contacts the 5S rRNA and the P site tRNA. Forms a bridge to the 30S subunit in the 70S ribosome.

In terms of biological role, this is one of the proteins that bind and probably mediate the attachment of the 5S RNA into the large ribosomal subunit, where it forms part of the central protuberance. In the 70S ribosome it contacts protein S13 of the 30S subunit (bridge B1b), connecting the 2 subunits; this bridge is implicated in subunit movement. Contacts the P site tRNA; the 5S rRNA and some of its associated proteins might help stabilize positioning of ribosome-bound tRNAs. This chain is Large ribosomal subunit protein uL5, found in Zymomonas mobilis subsp. mobilis (strain ATCC 31821 / ZM4 / CP4).